Reading from the N-terminus, the 434-residue chain is Gamma-enolase (434 aa).

The substrate site is built by His158 and Glu167. Glu210 functions as the Proton donor in the catalytic mechanism. Asp245, Glu293, and Asp318 together coordinate Mg(2+). Residues Glu293 and Asp318 each contribute to the substrate site. Lys343 functions as the Proton acceptor in the catalytic mechanism. Substrate-binding positions include 370-373 (SHRS) and Lys394.

Belongs to the enolase family. In terms of assembly, homodimer. Mg(2+) serves as cofactor. As to expression, expressed in the brain and, to much less but significant extents, in the pituitary and adrenal glands.

The protein localises to the cytoplasm. The catalysed reaction is (2R)-2-phosphoglycerate = phosphoenolpyruvate + H2O. It functions in the pathway carbohydrate degradation; glycolysis; pyruvate from D-glyceraldehyde 3-phosphate: step 4/5. The polypeptide is Gamma-enolase (ENO2) (Gallus gallus (Chicken)).